A 166-amino-acid polypeptide reads, in one-letter code: Phosphopantetheine adenylyltransferase (166 aa).

A substrate-binding site is contributed by Ser-11. ATP is bound by residues 11 to 12 (SF) and His-19. Residues Lys-43, Ala-76, and Arg-90 each coordinate substrate. ATP contacts are provided by residues 91-93 (GLR), Glu-101, and 126-132 (YRYFSSS).

It belongs to the bacterial CoaD family. In terms of assembly, homohexamer. It depends on Mg(2+) as a cofactor.

Its subcellular location is the cytoplasm. The catalysed reaction is (R)-4'-phosphopantetheine + ATP + H(+) = 3'-dephospho-CoA + diphosphate. It participates in cofactor biosynthesis; coenzyme A biosynthesis; CoA from (R)-pantothenate: step 4/5. In terms of biological role, reversibly transfers an adenylyl group from ATP to 4'-phosphopantetheine, yielding dephospho-CoA (dPCoA) and pyrophosphate. The sequence is that of Phosphopantetheine adenylyltransferase from Streptococcus mutans serotype c (strain ATCC 700610 / UA159).